The primary structure comprises 2042 residues: Cell adhesion molecule DSCAML1 (2042 aa).

The signal sequence occupies residues 1 to 17 (MWLVTFFLLYSLRKAHT). Topologically, residues 18 to 1592 (EDVGTSLYFV…AQGEGDDVKK (1575 aa)) are extracellular. N-linked (GlcNAc...) asparagine glycosylation is found at N28 and N78. Ig-like C2-type domains lie at 37 to 107 (SSTV…AENS), 114 to 216 (PNIR…ARLS), 227 to 311 (PTML…GTLT), 315 to 403 (PLRV…SIIT), 409 to 502 (PRIV…ARIN), 507 to 587 (PSIR…LSIS), 597 to 686 (PPLI…RQLI), 691 to 785 (PRFV…MFLT), and 789 to 886 (PAMI…LTVQ). Intrachain disulfides connect C46/C102, C145/C197, C248/C295, C337/C387, and C430/C486. N369, N472, N514, N557, N667, N711, N750, N797, and N810 each carry an N-linked (GlcNAc...) asparagine glycan. Intrachain disulfides connect C527–C576 and C618–C670. A disulfide bond links C712 and C768. A disulfide bond links C811 and C868. Fibronectin type-III domains are found at residues 888–985 (PPDP…TEEA), 990–1089 (PPMD…TLED), 1094–1190 (PPEN…TKED), and 1194–1289 (PPAG…AGKA). N927, N1083, N1145, N1163, N1276, and N1346 each carry an N-linked (GlcNAc...) asparagine glycan. The Ig-like C2-type 10 domain occupies 1279–1368 (EKVTIEPAGK…SGYYTCTATN (90 aa)). A disulfide bridge links C1312 with C1364. Fibronectin type-III domains follow at residues 1384–1478 (PPDQ…THGR) and 1479–1579 (EPSF…TIPP). N1493, N1532, and N1562 each carry an N-linked (GlcNAc...) asparagine glycan. Residues 1593 to 1613 (LFTIACPIILATLGVALLFII) traverse the membrane as a helical segment. Over 1614–2042 (RKKRKEKRLK…GAYSKSYTLV (429 aa)) the chain is Cytoplasmic. Disordered regions lie at residues 1716 to 1742 (PLID…HSTR), 1781 to 1805 (SDSY…TESA), 1841 to 1865 (SSDQ…PSEP), and 1940 to 2042 (PPAR…YTLV). Over residues 1733–1742 (KSVKSAHSTR) the composition is skewed to basic residues. 2 stretches are compositionally biased toward polar residues: residues 1781-1790 (SDSYSASLSQ) and 1841-1863 (SSDQ…STPS). The segment covering 1951-1960 (AKPPGLPPPS) has biased composition (pro residues). Positions 1961–1983 (SSSSSTTLPQRTLPMPTAASTAP) are enriched in low complexity. The segment covering 1984 to 1995 (APAPAPAAPAEP) has biased composition (pro residues). Composition is skewed to low complexity over residues 1996 to 2005 (PANTTTTTTT) and 2023 to 2034 (GAGRAQKQGAGA).

As to quaternary structure, homodimer; mediates homophilic interactions to promote cell adhesion. In terms of tissue distribution, SDK1, SDK2, DSCAM and DSCAML1 are expressed in non-overlapping subsets of interneurons and retinal ganglion cells (RGCs) that form synapses in distinct inner plexiform layer (IPL) sublaminae.

The protein localises to the cell membrane. It is found in the synapse. Functionally, cell adhesion molecule that plays a role in neuronal self-avoidance. Promotes repulsion between specific neuronal processes of either the same cell or the same subtype of cells. Adhesion molecule that promotes lamina-specific synaptic connections in the retina: expressed in specific subsets of interneurons and retinal ganglion cells (RGCs) and promotes synaptic connectivity via homophilic interactions. This chain is Cell adhesion molecule DSCAML1 (DSCAML1), found in Gallus gallus (Chicken).